The following is a 370-amino-acid chain: Putative F-box protein At3g10430 (370 aa).

The region spanning 1–47 (MGSSLPFDLILEILQRTPAESLLRFKSTCKKWYELISNDKRFMYKHL) is the F-box domain.

The sequence is that of Putative F-box protein At3g10430 from Arabidopsis thaliana (Mouse-ear cress).